The primary structure comprises 329 residues: Glycerol-3-phosphate dehydrogenase [NAD(P)+] (329 aa).

Residues Trp15, His35, and Lys107 each contribute to the NADPH site. Residues Lys107, Gly135, and Ser137 each coordinate sn-glycerol 3-phosphate. Residue Ala139 coordinates NADPH. The sn-glycerol 3-phosphate site is built by Lys190, Asp243, Ser253, Arg254, and Asn255. Lys190 functions as the Proton acceptor in the catalytic mechanism. Residue Arg254 coordinates NADPH. NADPH contacts are provided by Leu276 and Glu278.

Belongs to the NAD-dependent glycerol-3-phosphate dehydrogenase family.

It localises to the cytoplasm. The catalysed reaction is sn-glycerol 3-phosphate + NAD(+) = dihydroxyacetone phosphate + NADH + H(+). It carries out the reaction sn-glycerol 3-phosphate + NADP(+) = dihydroxyacetone phosphate + NADPH + H(+). It functions in the pathway membrane lipid metabolism; glycerophospholipid metabolism. In terms of biological role, catalyzes the reduction of the glycolytic intermediate dihydroxyacetone phosphate (DHAP) to sn-glycerol 3-phosphate (G3P), the key precursor for phospholipid synthesis. In Rhodopseudomonas palustris (strain TIE-1), this protein is Glycerol-3-phosphate dehydrogenase [NAD(P)+].